The chain runs to 335 residues: Endo-1,4-beta-xylanase S20 (335 aa).

The signal sequence occupies residues 1–22 (MLRKLVTGALAAALLLSGQSNA). The 203-residue stretch at 39 to 241 (NNKNETGNGN…GSGYVDFTYA (203 aa)) folds into the GH11 domain. 2 N-linked (GlcNAc...) asparagine glycosylation sites follow: N42 and N78. E134 acts as the Nucleophile in catalysis. N202 carries an N-linked (GlcNAc...) asparagine glycan. Catalysis depends on E228, which acts as the Proton donor. A glycan (N-linked (GlcNAc...) asparagine) is linked at N251. The interval 251 to 291 (NASAPSNNNNNNNNNNDNNGNWNNWNNNNNNNNNNNNNNNN) is disordered. A compositionally biased stretch (low complexity) spans 257–291 (NNNNNNNNNNDNNGNWNNWNNNNNNNNNNNNNNNN). The region spanning 300 to 335 (NCAAIWGQCGGSGYNGPKCCKQGSCKQINQWYSQCQ) is the CBM1 domain.

This sequence belongs to the glycosyl hydrolase 11 (cellulase G) family.

It localises to the secreted. The catalysed reaction is Endohydrolysis of (1-&gt;4)-beta-D-xylosidic linkages in xylans.. It participates in glycan degradation; xylan degradation. Endo-1,4-beta-xylanase involved in the hydrolysis of xylan, a major structural heterogeneous polysaccharide found in plant biomass representing the second most abundant polysaccharide in the biosphere, after cellulose. This Neocallimastix patriciarum (Rumen fungus) protein is Endo-1,4-beta-xylanase S20 (xynS20).